Reading from the N-terminus, the 189-residue chain is Alanine and glycine-rich protein (189 aa).

The segment covering 127–160 (AGAGGGSGGGGGGGSGSGGSGGSGGSGGSGGNDG) has biased composition (gly residues). A disordered region spans residues 127–170 (AGAGGGSGGGGGGGSGSGGSGGSGGSGGSGGNDGNDGNDGSSSR).

Component of the organic matrix of calcified shell layers like nacre and prisms.

The protein resides in the secreted. In Mytilus californianus (California mussel), this protein is Alanine and glycine-rich protein.